A 222-amino-acid polypeptide reads, in one-letter code: Tegument protein UL26 (222 aa).

It belongs to the herpesviridae US22 family. As to quaternary structure, interacts with UL25. Interacts with ISGylation machinery components ISG15, UBA7 and HERC5; these interactions inhibit global protein ISGylation. ISGylated; ISGylation regulates UL26 stability and inhibits its activities to suppress NF-kappa-B signaling.

Its subcellular location is the virion tegument. It is found in the host nucleus. Functionally, plays a role in the inhibition of host NF-kappa-B. This inhibition affects both the canonical and the non-canonical pathways. Blocks the induction of host IKK phosphorylation. May also influence the normal phosphorylation state of several tegument proteins including pp28 in virions. Also suppresses virus-induced ISGylation independent of its own ISGylation. The protein is Tegument protein UL26 (UL26) of Homo sapiens (Human).